Here is a 141-residue protein sequence, read N- to C-terminus: Large-conductance mechanosensitive channel (141 aa).

The next 3 membrane-spanning stretches (helical) occupy residues 17–37 (MDLA…ASIV), 40–60 (LIMP…LFIA), and 86–106 (GNFV…FIIV).

The protein belongs to the MscL family. As to quaternary structure, homopentamer.

The protein resides in the cell inner membrane. Functionally, channel that opens in response to stretch forces in the membrane lipid bilayer. May participate in the regulation of osmotic pressure changes within the cell. The polypeptide is Large-conductance mechanosensitive channel (Thiobacillus denitrificans (strain ATCC 25259 / T1)).